The following is a 268-amino-acid chain: Eukaryotic translation initiation factor 3 subunit G-2 (268 aa).

The RRM domain occupies Ser187–Pro265.

The protein belongs to the eIF-3 subunit G family. As to quaternary structure, component of the eukaryotic translation initiation factor 3 (eIF-3) complex. The eIF-3 complex interacts with pix.

It localises to the cytoplasm. Its function is as follows. RNA-binding component of the eukaryotic translation initiation factor 3 (eIF-3) complex, which is involved in protein synthesis of a specialized repertoire of mRNAs and, together with other initiation factors, stimulates binding of mRNA and methionyl-tRNAi to the 40S ribosome. The eIF-3 complex specifically targets and initiates translation of a subset of mRNAs involved in cell proliferation. This subunit can bind 18S rRNA. The chain is Eukaryotic translation initiation factor 3 subunit G-2 from Drosophila willistoni (Fruit fly).